The following is a 381-amino-acid chain: NF-kappa-B inhibitor-like protein 1 (381 aa).

The tract at residues 1–34 (MSNPSPQVPEEEASTSVCRPKSSMASTSRRQRRE) is disordered. ANK repeat units lie at residues 64–93 (GQPP…DPAH) and 97–130 (HGDT…AMGI). 2 disordered regions span residues 129-167 (GIKN…EWRQ) and 186-294 (GDAS…RGSL). S150 carries the phosphoserine modification. Positions 150–159 (SAEEEEEDDA) are enriched in acidic residues. Composition is skewed to basic and acidic residues over residues 218-228 (REAEGSRRPPR) and 238-287 (QQEE…EHPR).

As to quaternary structure, interacts with CACTIN (via N-terminal domain); the interaction occurs in a proinflammatory-independent manner. As to expression, detected in different cell types including monocytes, T-cells, B-cells and hepatocytes.

It localises to the nucleus. In terms of biological role, involved in the regulation of innate immune response. Acts as negative regulator of Toll-like receptor and interferon-regulatory factor (IRF) signaling pathways. Contributes to the negative regulation of transcriptional activation of NF-kappa-B target genes in response to endogenous proinflammatory stimuli. This is NF-kappa-B inhibitor-like protein 1 (NFKBIL1) from Homo sapiens (Human).